We begin with the raw amino-acid sequence, 586 residues long: Solute carrier family 13 member 2 (586 aa).

3 helical membrane passes run 13 to 33 (SYLI…IVQT), 53 to 73 (ALPL…MGIM), and 86 to 106 (TNIL…WNLH). The span at 165–175 (DVEEGNSNPSF) shows a compositional bias: polar residues. Residues 165–209 (DVEEGNSNPSFELQEASPQKEETKLDNGQAVSVSSEPRAQKTKEH) are disordered. Helical transmembrane passes span 215–235 (GLSL…LTGT), 264–284 (FAFP…QVLF), 319–339 (PMSF…VLWF), 366–386 (GTVA…IPGL), 407–427 (TVND…FALA), 445–465 (PLQH…VAIF), 478–498 (FLPI…YVML), 506–526 (LAFM…FGGL), and 535–555 (GFLL…SWSI).

The protein belongs to the SLC13A/DASS transporter (TC 2.A.47) family. NADC subfamily. Highly expressed in kidney and small intestine. Not detectable in brain, heart, stomach and skeletal muscle.

The protein localises to the apical cell membrane. The catalysed reaction is succinate(out) + 3 Na(+)(out) = succinate(in) + 3 Na(+)(in). It carries out the reaction fumarate(out) + 3 Na(+)(out) = fumarate(in) + 3 Na(+)(in). It catalyses the reaction 2-oxoglutarate(out) + 3 Na(+)(out) = 2-oxoglutarate(in) + 3 Na(+)(in). Its activity is regulated as follows. Li(+) decreases succinate transport in the presence of Na(+), by competing at one of the three cation binding sites. In terms of biological role, low-affinity sodium-dicarboxylate cotransporter, that mediates the entry of citric acid cycle intermediates, such as succinate, citrate, fumarate and alpha-ketoglutarate (2-oxoglutarate) into the small intestine and renal proximal tubule. Can transport citrate in a Na(+)-dependent manner, recognizing the divalent form of citrate rather than the trivalent form which is normally found in blood. Transports the dicarboxylate into the cell with a probable stoichiometry of 3 Na(+) for 1 divalent dicarboxylate, rendering the process electrogenic. Has a critical role in renal dicarboxylate transport. This Mus musculus (Mouse) protein is Solute carrier family 13 member 2 (Slc13a2).